Consider the following 172-residue polypeptide: Protein PLASTID REDOX INSENSITIVE 2, chloroplastic (172 aa).

A chloroplast-targeting transit peptide spans 1-54; the sequence is MAARLWAAAVAPATLNPPLLTLSASSSPSSSRLRRSVLGRLRSRAPRPADFVCR.

The protein resides in the plastid. The protein localises to the chloroplast stroma. It localises to the chloroplast nucleoid. Functionally, required for the activity of the plastid-encoded RNA polymerase (PEP) and full expression of genes transcribed by PEP. This Oryza sativa subsp. japonica (Rice) protein is Protein PLASTID REDOX INSENSITIVE 2, chloroplastic.